A 612-amino-acid polypeptide reads, in one-letter code: UvrABC system protein C (612 aa).

Positions 20–98 (THSGVYRMLD…IKQHRPKYNI (79 aa)) constitute a GIY-YIG domain. The UVR domain maps to 208 to 243 (SSVLEEISAKMYQASEDMEYEKAQVYRDQLVVLRKL).

Belongs to the UvrC family. Interacts with UvrB in an incision complex.

The protein resides in the cytoplasm. The UvrABC repair system catalyzes the recognition and processing of DNA lesions. UvrC both incises the 5' and 3' sides of the lesion. The N-terminal half is responsible for the 3' incision and the C-terminal half is responsible for the 5' incision. The protein is UvrABC system protein C of Francisella tularensis subsp. mediasiatica (strain FSC147).